The primary structure comprises 332 residues: DnAJ-like protein slr0093 (332 aa).

A J domain is found at 6-75 (FKDYYQILGV…RQKYDQFGRY (70 aa)).

This chain is DnAJ-like protein slr0093, found in Synechocystis sp. (strain ATCC 27184 / PCC 6803 / Kazusa).